The sequence spans 916 residues: MAYQPPGKDNGAQSPNYNDSGHRLEDLPHGATYEEEASTGLLSHQQGGPFGGPFDDPHQRGTSPVRPTSGYSLTETYAPDAGFHDPYSTTGSVYSGNSAENPAAAFGVPGRVASPYARSETSSTEAWRQRQAPGGGGGGGLRRYATRKVKLVQGSVLSVDYPVPSAIQNAIQAKYRNDLEGGSEEFTHMRYTAATCDPNDFTLHNGYNLRPAMYNRHTELLIAITYYNEDKTLTARTLHGVMQNIRDIVNLKKSEFWNKGGPAWQKIVVALVFDGIDPCDKDTLDVLATIGIYQDGVMKRDVDGKETVAHIFEYTTQLSVTPNQQLIRPTDDGPTTLPPVQMMFCLKQKNSKKINSHRWLFNAFGRILNPEVCILLDAGTKPGQKSLLALWEGFYNDKDLGGACGEIHAMLGKGWKNLINPLVAAQNFEYKISNILDKPLESSFGYVSVLPGAFSAYRFRAIMGRPLEQYFHGDHTLSKQLGKKGIEGMNIFKKNMFLAEDRILCFELVAKAGSKWHLSYIKASKGETDVPEGVAEFISQRRRWLNGSFAAGLYSLMHFGRMYKSGHNIIRMFFLHIQMLYNVFNTILTWFSLASYWLTTTVIMDLVGTPSESNGNKGFPFGKSATPIINTIVKYVYLGLLLLQFILALGNRPKGSRFSYLTSFVVFGIIQIYVVVDALYLVVRAFTNSDAIDFVTDQGVGEFLKSFFSSSGAGIIIIALAATFGLYFVASFMYLDPWHMFTSFPAYMFVQSSYINVLNVYAFSNWHDVSWGTKGSDKADALPSATTTKEDGGKEAVIEEIDKPQADIDSQFEATVKRALTPYVPPVEKDEKSLDDSYKSFRTRLVTLWIFSNAFLAVCITSDGMDKFGFTNTATDRTSRFFQALLWSNAAVALVRFIGACWFLGKTGLMCCFARR.

2 disordered regions span residues 1 to 84 (MAYQ…AGFH) and 114 to 141 (SPYARSETSSTEAWRQRQAPGGGGGGGL). Asn-18 is a glycosylation site (N-linked (GlcNAc...) asparagine). Positions 60-75 (RGTSPVRPTSGYSLTE) are enriched in polar residues. Asn-546 carries N-linked (GlcNAc...) asparagine glycosylation. A run of 7 helical transmembrane segments spans residues 572-594 (MFFLHIQMLYNVFNTILTWFSLA), 628-648 (IINTIVKYVYLGLLLLQFILA), 663-683 (SFVVFGIIQIYVVVDALYLVV), 715-735 (IIIIALAATFGLYFVASFMYL), 743-763 (SFPAYMFVQSSYINVLNVYAF), 845-865 (LVTLWIFSNAFLAVCITSDGM), and 884-904 (ALLWSNAAVALVRFIGACWFL).

This sequence belongs to the chitin synthase family. Class III subfamily.

The protein resides in the cell membrane. It carries out the reaction [(1-&gt;4)-N-acetyl-beta-D-glucosaminyl](n) + UDP-N-acetyl-alpha-D-glucosamine = [(1-&gt;4)-N-acetyl-beta-D-glucosaminyl](n+1) + UDP + H(+). Polymerizes chitin, a structural polymer of the cell wall and septum, by transferring the sugar moiety of UDP-GlcNAc to the non-reducing end of the growing chitin polymer. Involved in hyphal growth and more particularly in branching. The chain is Chitin synthase B from Aspergillus oryzae (strain ATCC 42149 / RIB 40) (Yellow koji mold).